The chain runs to 466 residues: Chromogranin-A (466 aa).

The signal sequence occupies residues 1-18 (MRSSAALALLLCAGQVFA). A disulfide bond links Cys35 and Cys56. A disordered region spans residues 91 to 443 (AQQQQQQQQQ…ANRRAEDQEL (353 aa)). A compositionally biased stretch (low complexity) spans 92 to 111 (QQQQQQQQQQQQQQQQQQQQ). Phosphoserine is present on Ser114. Residues 131-155 (KHGDAASEAPSKDTVEKREDSDKGQ) show a composition bias toward basic and acidic residues. Over residues 177–213 (ESSMMGNSQSPGEDTANNTQSPTSLPSQEHGIPQTTE) the composition is skewed to polar residues. Ser215 bears the Phosphoserine mark. Positions 233–247 (KEEEEEEKEEEEEEK) are enriched in acidic residues. A compositionally biased stretch (basic and acidic residues) spans 248-259 (EEKAIAREKAGP). Residues Ser288 and Ser312 each carry the phosphoserine modification. Positions 305–314 (GKGELEHSQQ) are enriched in basic and acidic residues. Gly332 carries the glycine amide modification. The span at 351–378 (RLSREWEDKRWSRMDQLAKELTAEKRLE) shows a compositional bias: basic and acidic residues. Phosphoserine is present on residues Ser353 and Ser386. Methionine sulfoxide is present on Met387. Residues 412-440 (SSREDSVEARGDFEEKKEEEGSANRRAED) are compositionally biased toward basic and acidic residues. A phosphoserine mark is found at Ser413, Ser417, and Ser433. The O-linked (Xyl...) (chondroitin sulfate) serine glycan is linked to Ser433. A Pyrrolidone carboxylic acid modification is found at Gln441. At Ser447 the chain carries Phosphoserine.

Belongs to the chromogranin/secretogranin protein family. In terms of assembly, self-interacts; self-assembly is promoted in vitro by chondroitin sulfate attachment which occurs at mildly acidic pH conditions. Interacts with SCG3; this interaction is optimal in conditions mimicking the lumenal milieu of the trans-Golgi network, i.e. pH 5.5 and 10 mM Ca(+2). Interacts with ITPR1 in the secretory granules. O-glycosylated; contains chondroitin sulfate (CS). CS attachment is pH-dependent, being observed at mildly acidic conditions of pH 5 but not at neutral pH, and promotes self-assembly in vitro. In terms of tissue distribution, expressed in the brain and adrenal and pituitary glands.

It localises to the cytoplasmic vesicle. The protein localises to the secretory vesicle. Its subcellular location is the neuronal dense core vesicle. The protein resides in the secreted. Its function is as follows. Strongly inhibits glucose induced insulin release from the pancreas. Catestatin inhibits catecholamine release from chromaffin cells and noradrenergic neurons by acting as a non-competitive nicotinic cholinergic antagonist. Can induce mast cell migration, degranulation and production of cytokines and chemokines. In terms of biological role, serpinin regulates granule biogenesis in endocrine cells by up-regulating the transcription of protease nexin 1 (SERPINE2) via a cAMP-PKA-SP1 pathway. This leads to inhibition of granule protein degradation in the Golgi complex which in turn promotes granule formation. Serpinin and pGlu-serpinin can enhance both myocardial contractility (inotropy) and relaxation (lusitropy) and this cardio-stimulation requires a beta 1-adrenergic receptor/adenylate cyclase/cAMP/PKA pathway. The chain is Chromogranin-A (Chga) from Rattus norvegicus (Rat).